The sequence spans 111 residues: Large ribosomal subunit protein uL22 (111 aa).

This sequence belongs to the universal ribosomal protein uL22 family. As to quaternary structure, part of the 50S ribosomal subunit.

This protein binds specifically to 23S rRNA; its binding is stimulated by other ribosomal proteins, e.g. L4, L17, and L20. It is important during the early stages of 50S assembly. It makes multiple contacts with different domains of the 23S rRNA in the assembled 50S subunit and ribosome. In terms of biological role, the globular domain of the protein is located near the polypeptide exit tunnel on the outside of the subunit, while an extended beta-hairpin is found that lines the wall of the exit tunnel in the center of the 70S ribosome. This Clostridium novyi (strain NT) protein is Large ribosomal subunit protein uL22.